Consider the following 156-residue polypeptide: MKLIVAAVGTRMPDWVETAWDDYAKRLPADCALELREIKPEPRTSGKTPAQMMAAEARRIEAALPAGALRIALDERGRDLTTVGLSQQLEKWRGEGRDVAFLVGGPDGLDAQLKASCGGLIRLSSLTLPHPMVRVLLSEQLYRAWAILTNHPYHRA.

S-adenosyl-L-methionine-binding positions include leucine 73, glycine 104, and 123 to 128 (LSSLTL).

This sequence belongs to the RNA methyltransferase RlmH family. As to quaternary structure, homodimer.

The protein resides in the cytoplasm. The catalysed reaction is pseudouridine(1915) in 23S rRNA + S-adenosyl-L-methionine = N(3)-methylpseudouridine(1915) in 23S rRNA + S-adenosyl-L-homocysteine + H(+). Functionally, specifically methylates the pseudouridine at position 1915 (m3Psi1915) in 23S rRNA. This chain is Ribosomal RNA large subunit methyltransferase H, found in Bordetella avium (strain 197N).